The sequence spans 342 residues: Cathepsin B-like cysteine proteinase (342 aa).

The N-terminal stretch at 1 to 17 is a signal peptide; sequence MLKIAVYIVSLFTFLEA. The propeptide at 18 to 89 is activation peptide; it reads HVTTRNNQRI…TVDHHDLNVE (72 aa). Intrachain disulfides connect C103–C132, C115–C159, C151–C217, C152–C155, C188–C221, and C196–C207. The active site involves C118. Catalysis depends on residues H288 and N308.

Belongs to the peptidase C1 family. As to expression, intestine (gut).

Its function is as follows. Thiol protease. Has a role as a digestive enzyme. This is Cathepsin B-like cysteine proteinase (CATB) from Schistosoma japonicum (Blood fluke).